The primary structure comprises 465 residues: Ribulose bisphosphate carboxylase large chain (465 aa).

Residue Lys4 is modified to N6,N6,N6-trimethyllysine. Residues Asn113 and Thr163 each contribute to the substrate site. Residue Lys165 is the Proton acceptor of the active site. Lys167 lines the substrate pocket. Positions 191, 193, and 194 each coordinate Mg(2+). Lys191 carries the post-translational modification N6-carboxylysine. His284 (proton acceptor) is an active-site residue. Arg285, His317, and Ser369 together coordinate substrate.

The protein belongs to the RuBisCO large chain family. Type I subfamily. In terms of assembly, heterohexadecamer of 8 large chains and 8 small chains; disulfide-linked. The disulfide link is formed within the large subunit homodimers. Mg(2+) serves as cofactor. The disulfide bond which can form in the large chain dimeric partners within the hexadecamer appears to be associated with oxidative stress and protein turnover.

Its subcellular location is the plastid. It localises to the chloroplast. The catalysed reaction is 2 (2R)-3-phosphoglycerate + 2 H(+) = D-ribulose 1,5-bisphosphate + CO2 + H2O. The enzyme catalyses D-ribulose 1,5-bisphosphate + O2 = 2-phosphoglycolate + (2R)-3-phosphoglycerate + 2 H(+). In terms of biological role, ruBisCO catalyzes two reactions: the carboxylation of D-ribulose 1,5-bisphosphate, the primary event in carbon dioxide fixation, as well as the oxidative fragmentation of the pentose substrate in the photorespiration process. Both reactions occur simultaneously and in competition at the same active site. This Clitoria ternatea (Butterfly pea) protein is Ribulose bisphosphate carboxylase large chain.